A 491-amino-acid polypeptide reads, in one-letter code: Cytochrome P450 81F2 (491 aa).

Residues 283–303 (VIIKGLMLSMMLAGTDTAAVT) form a helical membrane-spanning segment. Cys429 contacts heme.

It belongs to the cytochrome P450 family. It depends on heme as a cofactor.

It is found in the membrane. It participates in secondary metabolite biosynthesis. Its function is as follows. Involved in indole glucosinolate biosynthesis. Catalyzes hydroxylation reactions of the glucosinolate indole ring. Converts indol-3-yl-methylglucosinolate (I3M) to 4-hydroxy-indol-3-yl-methylglucosinolate (4OH-I3M) and/or 1-hydroxy-indol-3-yl-methylglucosinolate (1OH-I3M) intermediates. These hydroxy intermediates are converted to 4-methoxy-indol-3-yl-methylglucosinolate (4MO-I3M) and 1-methoxy-indol-3-yl-methylglucosinolate (1MO-I3M) by indole glucosinolate methyltransferase 1 and 2 (IGMT1 and IGMT2). Contributes to defense against the green peach aphid (Myzus persicae), a generalist phloem-feeding herbivore. Required for the biosynthesis of antifungal indole glucosinolate metabolites. Required for the pathogen-induced accumulation of 4MO-I3M, which in turn is activated by the atypical BGLU26/PEN2 myrosinase. Required for the biosynthesis of Trp-derived antifungal compounds and non-host resistance to the necrotrophic fungal pathogen Plectosphaerella cucumerina. Required for resistance to the non-adapted fungal pathogen Colletotrichum gloeosporioides. The protein is Cytochrome P450 81F2 of Arabidopsis thaliana (Mouse-ear cress).